Reading from the N-terminus, the 277-residue chain is Energy-coupling factor transporter transmembrane protein EcfT (277 aa).

6 helical membrane passes run 39-59 (ITIL…YAII), 61-81 (FFCF…WNGV), 85-105 (IGLI…GHVF), 121-141 (AIYI…MTVT), 163-183 (VPVD…PTLF), and 254-274 (SKYD…LLIF).

Belongs to the energy-coupling factor EcfT family. Forms a stable energy-coupling factor (ECF) transporter complex composed of 2 membrane-embedded substrate-binding proteins (S component), 2 ATP-binding proteins (A component) and 2 transmembrane proteins (T component). May be able to interact with more than 1 S component at a time.

It is found in the cell membrane. In terms of biological role, transmembrane (T) component of an energy-coupling factor (ECF) ABC-transporter complex. Unlike classic ABC transporters this ECF transporter provides the energy necessary to transport a number of different substrates. This is Energy-coupling factor transporter transmembrane protein EcfT from Lactobacillus helveticus (strain DPC 4571).